We begin with the raw amino-acid sequence, 336 residues long: F420-dependent glucose-6-phosphate dehydrogenase (336 aa).

Residue D40 coordinates coenzyme F420-(gamma-Glu)n. The active-site Proton donor is the H41. Coenzyme F420-(gamma-Glu)n contacts are provided by residues T77 and 108 to 109 (TG). E110 functions as the Proton acceptor in the catalytic mechanism. Coenzyme F420-(gamma-Glu)n-binding positions include N113, 176 to 177 (SG), and 179 to 180 (AA). Substrate contacts are provided by T194, K197, K258, and R282.

This sequence belongs to the F420-dependent glucose-6-phosphate dehydrogenase family. Homodimer.

It catalyses the reaction oxidized coenzyme F420-(gamma-L-Glu)(n) + D-glucose 6-phosphate + H(+) = 6-phospho-D-glucono-1,5-lactone + reduced coenzyme F420-(gamma-L-Glu)(n). Functionally, catalyzes the coenzyme F420-dependent oxidation of glucose 6-phosphate (G6P) to 6-phosphogluconolactone. The polypeptide is F420-dependent glucose-6-phosphate dehydrogenase (Microbacterium testaceum (strain StLB037)).